A 118-amino-acid polypeptide reads, in one-letter code: Putative pterin-4-alpha-carbinolamine dehydratase (118 aa).

The protein belongs to the pterin-4-alpha-carbinolamine dehydratase family.

The enzyme catalyses (4aS,6R)-4a-hydroxy-L-erythro-5,6,7,8-tetrahydrobiopterin = (6R)-L-erythro-6,7-dihydrobiopterin + H2O. The polypeptide is Putative pterin-4-alpha-carbinolamine dehydratase (Pseudomonas aeruginosa (strain LESB58)).